The following is a 689-amino-acid chain: Glycine--tRNA ligase beta subunit (689 aa).

This sequence belongs to the class-II aminoacyl-tRNA synthetase family. As to quaternary structure, tetramer of two alpha and two beta subunits.

The protein localises to the cytoplasm. The catalysed reaction is tRNA(Gly) + glycine + ATP = glycyl-tRNA(Gly) + AMP + diphosphate. The polypeptide is Glycine--tRNA ligase beta subunit (Pectobacterium carotovorum subsp. carotovorum (strain PC1)).